We begin with the raw amino-acid sequence, 290 residues long: Diaminopimelate epimerase (290 aa).

The substrate site is built by N11 and N78. C87 acts as the Proton donor in catalysis. Substrate contacts are provided by residues 88–89, N163, N199, and 217–218; these read GN and ER. The Proton acceptor role is filled by C226. 227-228 is a substrate binding site; sequence GT.

This sequence belongs to the diaminopimelate epimerase family. Homodimer.

It localises to the cytoplasm. The enzyme catalyses (2S,6S)-2,6-diaminopimelate = meso-2,6-diaminopimelate. It participates in amino-acid biosynthesis; L-lysine biosynthesis via DAP pathway; DL-2,6-diaminopimelate from LL-2,6-diaminopimelate: step 1/1. Functionally, catalyzes the stereoinversion of LL-2,6-diaminopimelate (L,L-DAP) to meso-diaminopimelate (meso-DAP), a precursor of L-lysine and an essential component of the bacterial peptidoglycan. The chain is Diaminopimelate epimerase from Mycobacterium ulcerans (strain Agy99).